The chain runs to 1155 residues: ATP-dependent helicase/deoxyribonuclease subunit B (1155 aa).

Residue 8–15 (GRSGSGKS) coordinates ATP. [4Fe-4S] cluster is bound by residues cysteine 793, cysteine 1115, cysteine 1118, and cysteine 1124.

Belongs to the helicase family. AddB/RexB type 1 subfamily. As to quaternary structure, heterodimer of AddA and AddB. It depends on Mg(2+) as a cofactor. The cofactor is [4Fe-4S] cluster.

Functionally, the heterodimer acts as both an ATP-dependent DNA helicase and an ATP-dependent, dual-direction single-stranded exonuclease. Recognizes the chi site generating a DNA molecule suitable for the initiation of homologous recombination. The AddB subunit has 5' -&gt; 3' nuclease activity but not helicase activity. The polypeptide is ATP-dependent helicase/deoxyribonuclease subunit B (Clostridioides difficile (strain 630) (Peptoclostridium difficile)).